An 803-amino-acid polypeptide reads, in one-letter code: Pre-mRNA-splicing ATP-dependent RNA helicase prp28 (803 aa).

2 disordered regions span residues 1–83 (MDDI…PLSV) and 115–210 (KRAK…PVDD). Positions 11–62 (EVPPPQPPPEPVERPPTPPPPPPEESVAPPPPPEVVAPPPPPEDLPPAPPPP) are enriched in pro residues. The segment covering 115–126 (KRAKEVEAERRL) has biased composition (basic and acidic residues). Positions 135–146 (SATQSPSVSSEV) are enriched in polar residues. Residues 367-395 (RSWDESGLPKRLMELVNKVGYKEPTPIQR) carry the Q motif motif. Residues 398 to 603 (IPIAMQSRDL…RKYLRRPAIV (206 aa)) form the Helicase ATP-binding domain. 411–418 (AVTGSGKT) lines the ATP pocket. A DEAD box motif is present at residues 526 to 529 (DEAD). Residues 614–777 (TVEQRVEFIA…RLPEELRKHE (164 aa)) form the Helicase C-terminal domain. The interval 773-803 (LRKHEAAQSKPTRGFAKKNDDNSAFGSKGGW) is disordered.

Belongs to the DEAD box helicase family. DDX23/PRP28 subfamily. In terms of assembly, component of the U5 snRNP complex.

Its subcellular location is the cytoplasm. It localises to the nucleus. It catalyses the reaction ATP + H2O = ADP + phosphate + H(+). Functionally, ATP-dependent RNA helicase involved in mRNA splicing. May destabilize the U1/5'-splice site duplex to permit an effective competition for the 5'-splice site by the U6 snRNA, resulting in the switch between U1 and U6 at the 5'-splice site. May also act to unwind the U4/U6 base-pairing interaction in the U4/U6/U5 snRNP, facilitating the first covalent step of splicing. This Aspergillus oryzae (strain ATCC 42149 / RIB 40) (Yellow koji mold) protein is Pre-mRNA-splicing ATP-dependent RNA helicase prp28 (prp28).